A 275-amino-acid polypeptide reads, in one-letter code: MRLEGEVALVTGGGAGLGRAIVDRYVAEGARVAVLDKSAAGLEALRKLHGDAIVGVEGDVRSLDSHREAVARCVEAFGKLDCLVGNAGVWDYLTQLVDIPDDLISEAFEEMFEVNVKGYILAAKAALPALYQSKGSAIFTVSNAGFYPGGGGVLYTAGKHAVIGLIKQLAHEWGPRIRVNGIAPGGILGSDLRGLKSLDLQDKSISTFPLDDMLKSVLPTGRAATAEEYAGAYVFFATRGDTVPLTGSVLNFDGGMGVRGLFEASLGAQLDKHFG.

L9–A33 contacts NAD(+). Residue S142 coordinates substrate. The Proton acceptor role is filled by Y155.

This sequence belongs to the short-chain dehydrogenases/reductases (SDR) family.

The catalysed reaction is (1S,2R)-3-methylcyclohexa-3,5-diene-1,2-diol + NAD(+) = 3-methylcatechol + NADH + H(+). The protein operates within xenobiotic degradation; toluene degradation. This is Cis-toluene dihydrodiol dehydrogenase (todD) from Pseudomonas putida (strain ATCC 700007 / DSM 6899 / JCM 31910 / BCRC 17059 / LMG 24140 / F1).